A 239-amino-acid polypeptide reads, in one-letter code: tRNA (guanine-N(7)-)-methyltransferase (239 aa).

S-adenosyl-L-methionine contacts are provided by Glu-69, Glu-94, Asp-121, and Asp-144. Residue Asp-144 is part of the active site. Lys-148 provides a ligand contact to substrate. The tract at residues 150 to 155 (RHNKRR) is interaction with RNA. Residues Asp-180 and 217–220 (TKFE) contribute to the substrate site.

This sequence belongs to the class I-like SAM-binding methyltransferase superfamily. TrmB family. In terms of assembly, monomer.

The catalysed reaction is guanosine(46) in tRNA + S-adenosyl-L-methionine = N(7)-methylguanosine(46) in tRNA + S-adenosyl-L-homocysteine. It functions in the pathway tRNA modification; N(7)-methylguanine-tRNA biosynthesis. In terms of biological role, catalyzes the formation of N(7)-methylguanine at position 46 (m7G46) in tRNA. This is tRNA (guanine-N(7)-)-methyltransferase from Sodalis glossinidius (strain morsitans).